Consider the following 331-residue polypeptide: DNA fragmentation factor subunit alpha (331 aa).

The residue at position 1 (Met1) is an N-acetylmethionine. Positions 17–96 (PLKPCLLRRN…ALACNEKWIY (80 aa)) constitute a CIDE-N domain. Thr243 carries the post-translational modification Phosphothreonine. Positions 306 to 331 (LRNLSARRSPLPGEPQRPKRAKRDSS) are disordered.

In terms of assembly, heterodimer of DFFA and DFFB. Post-translationally, caspase-3 cleaves DFF45 at 2 sites to generate an active factor.

The protein resides in the cytoplasm. Inhibitor of the caspase-activated DNase (DFF40). The chain is DNA fragmentation factor subunit alpha (Dffa) from Mus musculus (Mouse).